Consider the following 493-residue polypeptide: MSSKVEYKPIQPHEEAENHFLQHELHKVKARKYYRCALVVAIIITLVFCILASQLLLFPFLSITSQTTETVLNKDIRCDDQCRFVLVESIPEGLVYDANSTINPSIFQSWMNIITNAKSSIDIASFYWSLTNEDTQTKEPSAHQGELILQELLNLKQRGVSLRVAVNPPDSPIRSKDISALKDRGADVRVVDMPKLTDGILHTKFWVVDNEHFYIGSANMDWRSLTQVKELGATIYNCSCLAQDLKKIFEAYWILGLPNATLPSPWPANYSTPYNKDTPMQVMLNSTASQVYLSSSPPPLSATGRTDDLQSIMNIIDDAKKFVYISVMDYSPTEEFSHPRRYWPEIDNHLRKAVYERNVNVRLLISCWKNSRPSMFTFLRSLAALHSNTSHYNIEVKIFVVPATEAQKKIPYARVNHNKYMVTDRVAYIGTSNWSGDYFINTAGSALVVNQTQSAGTSDTIQMQLQTVFERDWNSNYSLTFNTLSSWKEKCIF.

At 1–37 (MSSKVEYKPIQPHEEAENHFLQHELHKVKARKYYRCA) the chain is on the cytoplasmic side. Residues 38-58 (LVVAIIITLVFCILASQLLLF) form a helical; Signal-anchor for type II membrane protein membrane-spanning segment. Residues 59-493 (PFLSITSQTT…LSSWKEKCIF (435 aa)) lie on the Lumenal side of the membrane. The N-linked (GlcNAc...) asparagine glycan is linked to N99. A PLD phosphodiesterase 1 domain is found at 197-224 (TDGILHTKFWVVDNEHFYIGSANMDWRS). Active-site residues include H202, K204, and D209. N-linked (GlcNAc...) asparagine glycans are attached at residues N237, N259, N269, N285, and N388. One can recognise a PLD phosphodiesterase 2 domain in the interval 412–438 (YARVNHNKYMVTDRVAYIGTSNWSGDY). Catalysis depends on residues H417, K419, and D424. N433, N450, and N476 each carry an N-linked (GlcNAc...) asparagine glycan.

The protein belongs to the phospholipase D family. Post-translationally, N-glycosylated. In terms of processing, proteolytically processed to a soluble form that is stable within endosomes and lysosomes. During transport through the secretory pathway becomes proteolysed by cysteine proteases, thereby releasing a stable soluble lysosomal lumenal polypeptide, whereas the transmembrane-bound fragment is rapidly degraded. Its transport route to lysosomes involves ubiquitination and the ESCRT complex. Ubiquitinated. Ubiquitination mediates sorting into lysosomes.

The protein localises to the endoplasmic reticulum membrane. It localises to the lysosome lumen. Its subcellular location is the early endosome membrane. It is found in the late endosome membrane. The protein resides in the golgi apparatus membrane. The protein localises to the endosome membrane. The enzyme catalyses Exonucleolytic cleavage in the 5'- to 3'-direction to yield nucleoside 3'-phosphates.. In terms of biological role, 5'-&gt;3' DNA exonuclease which digests single-stranded DNA (ssDNA). Regulates inflammatory cytokine responses via the degradation of nucleic acids, by reducing the concentration of ssDNA able to stimulate TLR9, a nucleotide-sensing receptor in collaboration with PLD4. May be important in myotube formation. Plays a role in lysosomal homeostasis. Involved in the regulation of endosomal protein sorting. The protein is 5'-3' exonuclease PLD3 (pld3) of Xenopus laevis (African clawed frog).